Reading from the N-terminus, the 136-residue chain is MEEIKCLLCRYLKERQEKFISDWKKKVIIRERDPYKEEIIKNGEHLLSAFIMYLKEEISLQEIEITSKKIARERIDAKVNIAEFIHNTNVAKIEIMNILTLLNPDLQQYQALVKKINQFFDHLIYYTVHSYYEQKA.

This is an uncharacterized protein from Bacillus anthracis.